A 318-amino-acid polypeptide reads, in one-letter code: MRKSGCTVCSRSIGWVGLAVNTVLMVMKAFVGLIGGSQAMLADAMYSLKDMLNALMVVIGTTISSKPLDAEHPYGHGKVEFILSMVVSVVFIGLTGYLLVHAVQILLDESMHRTPHLIVLWAALVSVGVNVAMYFYSRCVAIETNSPIIKTMAKHHHGDATASGAVALGIIGAHYLNMPWIDPAVALWETIDLLLLGKVVFMDAYRGLMDHTAGEAVQNRIVDTAERVPGVRGVIHLRARYVGQDIWADMIIGVDPEHTVEQAHDICEAVQAAVCGKMRRIESLHVSAEAREAGDTSKPTFSEEPLTYDEVMLSKVDN.

Residues 1 to 210 form a transmembrane domain (TMD) region; the sequence is MRKSGCTVCS…FMDAYRGLMD (210 aa). Helical transmembrane passes span 13–33, 39–59, 81–101, and 117–137; these read IGWV…FVGL, AMLA…MVVI, FILS…LLVH, and LIVL…YFYS. The segment at 211-318 is C-terminal domain (CTD); sequence HTAGEAVQNR…DEVMLSKVDN (108 aa). Residues aspartate 249, histidine 264, histidine 285, and glutamate 289 each contribute to the Fe cation site.

Belongs to the cation diffusion facilitator (CDF) transporter (TC 2.A.4) family. Forms homodimers via its C-terminal domain (CTD) in the presence of metal cations. Interacts with MamB via their CTD.

Its subcellular location is the magnetosome membrane. The protein resides in the cell inner membrane. In terms of biological role, probably plays a role in biomineralization. Required for stable accumulation of MamB. Probably binds and transports iron. May nucleate iron crystal formation. The polypeptide is Magnetosome protein MamM (mamM) (Paramagnetospirillum magneticum (strain ATCC 700264 / AMB-1) (Magnetospirillum magneticum)).